Reading from the N-terminus, the 264-residue chain is 3-methyl-2-oxobutanoate hydroxymethyltransferase (264 aa).

Asp-45 and Asp-84 together coordinate Mg(2+). Residues 45–46 (DS), Asp-84, and Lys-113 each bind 3-methyl-2-oxobutanoate. Residue Glu-115 coordinates Mg(2+). Catalysis depends on Glu-182, which acts as the Proton acceptor.

Belongs to the PanB family. As to quaternary structure, homodecamer; pentamer of dimers. Requires Mg(2+) as cofactor.

It is found in the cytoplasm. The enzyme catalyses 3-methyl-2-oxobutanoate + (6R)-5,10-methylene-5,6,7,8-tetrahydrofolate + H2O = 2-dehydropantoate + (6S)-5,6,7,8-tetrahydrofolate. It functions in the pathway cofactor biosynthesis; (R)-pantothenate biosynthesis; (R)-pantoate from 3-methyl-2-oxobutanoate: step 1/2. Catalyzes the reversible reaction in which hydroxymethyl group from 5,10-methylenetetrahydrofolate is transferred onto alpha-ketoisovalerate to form ketopantoate. The protein is 3-methyl-2-oxobutanoate hydroxymethyltransferase of Nitrosococcus oceani (strain ATCC 19707 / BCRC 17464 / JCM 30415 / NCIMB 11848 / C-107).